Consider the following 92-residue polypeptide: Small ribosomal subunit protein bS20 (92 aa).

This sequence belongs to the bacterial ribosomal protein bS20 family.

In terms of biological role, binds directly to 16S ribosomal RNA. This Magnetococcus marinus (strain ATCC BAA-1437 / JCM 17883 / MC-1) protein is Small ribosomal subunit protein bS20.